We begin with the raw amino-acid sequence, 249 residues long: Chitooligosaccharide deacetylase (249 aa).

2 residues coordinate Mg(2+): His-61 and His-125.

Belongs to the YdjC deacetylase family. ChbG subfamily. In terms of assembly, homodimer. Mg(2+) is required as a cofactor.

It localises to the cytoplasm. It carries out the reaction N,N'-diacetylchitobiose + H2O = N-acetyl-beta-D-glucosaminyl-(1-&gt;4)-D-glucosamine + acetate. The enzyme catalyses diacetylchitobiose-6'-phosphate + H2O = N'-monoacetylchitobiose-6'-phosphate + acetate. The protein operates within glycan degradation; chitin degradation. Involved in the degradation of chitin. ChbG is essential for growth on the acetylated chitooligosaccharides chitobiose and chitotriose but is dispensable for growth on cellobiose and chitosan dimer, the deacetylated form of chitobiose. Deacetylation of chitobiose-6-P and chitotriose-6-P is necessary for both the activation of the chb promoter by the regulatory protein ChbR and the hydrolysis of phosphorylated beta-glucosides by the phospho-beta-glucosidase ChbF. Catalyzes the removal of only one acetyl group from chitobiose-6-P to yield monoacetylchitobiose-6-P, the inducer of ChbR and the substrate of ChbF. The protein is Chitooligosaccharide deacetylase of Escherichia coli O9:H4 (strain HS).